The following is a 441-amino-acid chain: Enolase (441 aa).

Gln-163 is a binding site for (2R)-2-phosphoglycerate. Glu-205 acts as the Proton donor in catalysis. Mg(2+) is bound by residues Asp-242, Glu-288, and Asp-315. Positions 340, 369, 370, and 391 each coordinate (2R)-2-phosphoglycerate. Residue Lys-340 is the Proton acceptor of the active site.

Belongs to the enolase family. Requires Mg(2+) as cofactor.

It is found in the cytoplasm. Its subcellular location is the secreted. The protein localises to the cell surface. The catalysed reaction is (2R)-2-phosphoglycerate = phosphoenolpyruvate + H2O. Its pathway is carbohydrate degradation; glycolysis; pyruvate from D-glyceraldehyde 3-phosphate: step 4/5. In terms of biological role, catalyzes the reversible conversion of 2-phosphoglycerate (2-PG) into phosphoenolpyruvate (PEP). It is essential for the degradation of carbohydrates via glycolysis. The sequence is that of Enolase from Ligilactobacillus salivarius (strain UCC118) (Lactobacillus salivarius).